The primary structure comprises 123 residues: Large ribosomal subunit protein bL12 (123 aa).

Belongs to the bacterial ribosomal protein bL12 family. Homodimer. Part of the ribosomal stalk of the 50S ribosomal subunit. Forms a multimeric L10(L12)X complex, where L10 forms an elongated spine to which 2 to 4 L12 dimers bind in a sequential fashion. Binds GTP-bound translation factors.

In terms of biological role, forms part of the ribosomal stalk which helps the ribosome interact with GTP-bound translation factors. Is thus essential for accurate translation. This chain is Large ribosomal subunit protein bL12, found in Rhodopseudomonas palustris (strain BisB5).